We begin with the raw amino-acid sequence, 226 residues long: Protein DVU_0532 (226 aa).

6 helical membrane passes run 1–23 (MYAFLTGPMLWASLLVFFGGLLA), 46–57 (AIGLQGAVQSAL), 73–99 (FFTVAFFLFHIGAVLVPLFLAGHNVIL), 112–131 (MGVADTLTVLAIIGLVMIAL), 141–164 (ILTTGYDWFILAVSAAPFVTGFLA), and 194–222 (LSHIVLFFMSRGQLGMDYAIKRGGATRGP).

Requires heme b as cofactor.

The protein localises to the cell membrane. Functionally, HMWC (high-molecular-weight cytochrome c), ORF2, ORF3, ORF4, ORF5 and ORF6 in the HMC operon form a transmembrane protein complex that allows electron flow from the periplasmic hydrogenase to the cytoplasmic enzymes that catalyze reduction of sulfates. In Nitratidesulfovibrio vulgaris (strain ATCC 29579 / DSM 644 / CCUG 34227 / NCIMB 8303 / VKM B-1760 / Hildenborough) (Desulfovibrio vulgaris), this protein is Protein DVU_0532.